The following is a 370-amino-acid chain: MAEASIEKTQILQKYLELDQRGRIIAEYVWIDGTGNLRSKGRTLKKRITSIDQLPEWNFDGSSTNQAPGHDSDIYLKPVAYYPDPFRRGDNIVVLAACYNNDGTPNKFNHRHEAAKLFAAHKDEEIWFGLEQEYTLFDMYDDVYGWPKGGYPAPQGPYYCGVGAGKVYARDMIEAHYRACLYAGLEISGINAEVMPSQWEFQVGPCTGIDMGDQLWMARYFLHRVAEEFGIKISFHPKPLKGDWNGAGCHTNVSTKEMRQPGGMKYIEQAIEKLSKRHAEHIKLYGSDNDMRLTGRHETASMTAFSSGVANRGSSIRIPRSVAKEGYGYFEDRRPASNIDPYLVTGIMCETVCGAIDNADMTKEFERESS.

Alanine 2 carries the N-acetylalanine modification. Serine 5 bears the Phosphoserine mark. The GS beta-grasp domain maps to 24–103; sequence IIAEYVWIDG…VLAACYNNDG (80 aa). In terms of domain architecture, GS catalytic spans 110-370; that stretch reads HRHEAAKLFA…MTKEFERESS (261 aa). Residues lysine 283, lysine 324, and lysine 363 each participate in a glycyl lysine isopeptide (Lys-Gly) (interchain with G-Cter in ubiquitin) cross-link.

The protein belongs to the glutamine synthetase family. Homooctamer.

The protein localises to the cytoplasm. The catalysed reaction is L-glutamate + NH4(+) + ATP = L-glutamine + ADP + phosphate + H(+). The sequence is that of Glutamine synthetase (GLN1) from Saccharomyces cerevisiae (strain ATCC 204508 / S288c) (Baker's yeast).